The primary structure comprises 410 residues: Segmentation protein fushi tarazu (410 aa).

Disordered stretches follow at residues 71–93 (TQTV…KAED), 138–157 (PAVS…QEYV), and 175–221 (SPQS…SAVS). Pro residues predominate over residues 76–85 (PVQPTTPPPK). The span at 190–199 (TPPPTTPTSL) shows a compositional bias: pro residues. Positions 254-313 (SKRTRQTYTRYQTLELEKEFHFNRYITRRRRIDIANALSLSERQIKIWFQNRRMKSKKDR) form a DNA-binding region, homeobox.

Belongs to the Antp homeobox family. Phosphorylated at as many as 16 sites. Expressed early in development in a striped pattern at the blastoderm stage. Later expressed in a specific subset of neuronal precursor cells, neurons and glia in the developing CNS. Between 5 and 6 hours of development, found in the midline precursor-2 cells in a segmentally repeating pattern. Expression in many other neuronal precursors follows and reaches a second peak of abundance at 9 hours of development. Expressed in the hindgut between 11-15 hours of development.

The protein localises to the nucleus. In terms of biological role, may play a role in determining neuronal identity, may be directly involved in specifying identity of individual neurons. Required during embryogenesis for the process of body segmentation. Homeotic protein, required in alternating segment primordia, it specifies the correct number of segments. The polypeptide is Segmentation protein fushi tarazu (ftz) (Drosophila melanogaster (Fruit fly)).